The primary structure comprises 479 residues: Anaerobic nitric oxide reductase flavorubredoxin (479 aa).

The segment at 30 to 210 (LRGSSYNSYL…PFSRLVTPKI (181 aa)) is zinc metallo-hydrolase. His-79, Glu-81, Asp-83, His-147, Asp-166, and His-227 together coordinate Fe cation. The Flavodoxin-like domain occupies 254 to 393 (ITIFYDTMSN…LCRQHGRDIA (140 aa)). Residues 260–264 (TMSNN) and 342–369 (AFGS…EMSL) contribute to the FMN site. The 52-residue stretch at 423–474 (GPKMQCSVCQWIYDPALGEPLQDVAPGTPWSEVPDNFLCPECSLGKDVFDVL) folds into the Rubredoxin-like domain. Residues Cys-428, Cys-431, Cys-461, and Cys-464 each coordinate Fe cation.

It in the N-terminal section; belongs to the zinc metallo-hydrolase group 3 family. In terms of assembly, homotetramer. Fe cation serves as cofactor. FMN is required as a cofactor.

Its subcellular location is the cytoplasm. It functions in the pathway nitrogen metabolism; nitric oxide reduction. Functionally, anaerobic nitric oxide reductase; uses NADH to detoxify nitric oxide (NO), protecting several 4Fe-4S NO-sensitive enzymes. Has at least 2 reductase partners, only one of which (NorW, flavorubredoxin reductase) has been identified. NO probably binds to the di-iron center; electrons enter from the NorW at rubredoxin and are transferred sequentially to the FMN center and the di-iron center. Also able to function as an aerobic oxygen reductase. The protein is Anaerobic nitric oxide reductase flavorubredoxin of Salmonella paratyphi A (strain ATCC 9150 / SARB42).